Consider the following 501-residue polypeptide: Growth/differentiation factor 5 (501 aa).

Positions 1-27 (MRLPKLLTFLLWYLAWLDLEFICTVLG) are cleaved as a signal peptide. The propeptide occupies 28–381 (APDLGQRPQG…YLFSQRRKRR (354 aa)). The interval 29–169 (PDLGQRPQGT…EPFRPPPITP (141 aa)) is disordered. Pro residues predominate over residues 99 to 111 (PRPGGPEPKPGHP). The segment covering 148–162 (KAREPGPPREPKEPF) has biased composition (basic and acidic residues). N-linked (GlcNAc...) asparagine glycosylation is present at Asn-189. Positions 246–265 (PSDTAKPAAPGGGRAAQLKL) are disordered. 3 disulfide bridges follow: Cys-400/Cys-466, Cys-429/Cys-498, and Cys-433/Cys-500.

This sequence belongs to the TGF-beta family. In terms of assembly, homodimer; disulfide-linked. Interacts with serine proteases, HTRA1 and HTRA3. Following LPS binding, may form a complex with CXCR4, HSP90AA1 and HSPA8. Interacts with high affinity with NOG; inhibits chondrogenesis. Interacts with high affinity with BMPR1B and lower affinity with BMPR1A; positively regulates chondrocyte differentiation and induces SMAD dependent signaling. Interacts with FBN1 (via N-terminal domain) and FBN2. Interacts with TGFBR3. As to expression, predominantly expressed in long bones during embryonic development. Expressed in monocytes (at protein level).

It localises to the secreted. The protein localises to the cell membrane. Functionally, growth factor involved in bone and cartilage formation. During cartilage development regulates differentiation of chondrogenic tissue through two pathways. Firstly, positively regulates differentiation of chondrogenic tissue through its binding of high affinity with BMPR1B and of less affinity with BMPR1A, leading to induction of SMAD1-SMAD5-SMAD8 complex phosphorylation and then SMAD protein signaling transduction. Secondly, negatively regulates chondrogenic differentiation through its interaction with NOG. Required to prevent excessive muscle loss upon denervation. This function requires SMAD4 and is mediated by phosphorylated SMAD1/5/8. Binds bacterial lipopolysaccharide (LPS) and mediates LPS-induced inflammatory response, including TNF secretion by monocytes. The polypeptide is Growth/differentiation factor 5 (GDF5) (Homo sapiens (Human)).